The following is a 321-amino-acid chain: Biotin synthase (321 aa).

In terms of domain architecture, Radical SAM core spans 44 to 270; it reads RGVRIHILNN…DAEVRAAGGR (227 aa). Positions 59, 63, and 66 each coordinate [4Fe-4S] cluster. Residues Cys-103, Cys-135, Cys-195, and Arg-265 each coordinate [2Fe-2S] cluster.

It belongs to the radical SAM superfamily. Biotin synthase family. In terms of assembly, homodimer. [4Fe-4S] cluster is required as a cofactor. The cofactor is [2Fe-2S] cluster.

It carries out the reaction (4R,5S)-dethiobiotin + (sulfur carrier)-SH + 2 reduced [2Fe-2S]-[ferredoxin] + 2 S-adenosyl-L-methionine = (sulfur carrier)-H + biotin + 2 5'-deoxyadenosine + 2 L-methionine + 2 oxidized [2Fe-2S]-[ferredoxin]. Its pathway is cofactor biosynthesis; biotin biosynthesis; biotin from 7,8-diaminononanoate: step 2/2. Catalyzes the conversion of dethiobiotin (DTB) to biotin by the insertion of a sulfur atom into dethiobiotin via a radical-based mechanism. The chain is Biotin synthase from Magnetococcus marinus (strain ATCC BAA-1437 / JCM 17883 / MC-1).